The sequence spans 123 residues: Small ribosomal subunit protein uS12 (123 aa).

Asp89 carries the 3-methylthioaspartic acid modification.

Belongs to the universal ribosomal protein uS12 family. Part of the 30S ribosomal subunit. Contacts proteins S8 and S17. May interact with IF1 in the 30S initiation complex.

In terms of biological role, with S4 and S5 plays an important role in translational accuracy. Its function is as follows. Interacts with and stabilizes bases of the 16S rRNA that are involved in tRNA selection in the A site and with the mRNA backbone. Located at the interface of the 30S and 50S subunits, it traverses the body of the 30S subunit contacting proteins on the other side and probably holding the rRNA structure together. The combined cluster of proteins S8, S12 and S17 appears to hold together the shoulder and platform of the 30S subunit. This is Small ribosomal subunit protein uS12 from Orientia tsutsugamushi (strain Ikeda) (Rickettsia tsutsugamushi).